The primary structure comprises 336 residues: Dihydroorotate dehydrogenase (quinone) (336 aa).

FMN-binding positions include 62 to 66 (AGLDK) and T86. K66 is a substrate binding site. Position 111 to 115 (111 to 115 (NRMGF)) interacts with substrate. The FMN site is built by N139 and N172. N172 provides a ligand contact to substrate. The active-site Nucleophile is the S175. N177 contributes to the substrate binding site. The FMN site is built by K217 and T245. 246–247 (NT) is a substrate binding site. Residues G268, G297, and 318-319 (YS) contribute to the FMN site.

This sequence belongs to the dihydroorotate dehydrogenase family. Type 2 subfamily. In terms of assembly, monomer. It depends on FMN as a cofactor.

Its subcellular location is the cell membrane. It catalyses the reaction (S)-dihydroorotate + a quinone = orotate + a quinol. It participates in pyrimidine metabolism; UMP biosynthesis via de novo pathway; orotate from (S)-dihydroorotate (quinone route): step 1/1. In terms of biological role, catalyzes the conversion of dihydroorotate to orotate with quinone as electron acceptor. This is Dihydroorotate dehydrogenase (quinone) from Citrobacter koseri (strain ATCC BAA-895 / CDC 4225-83 / SGSC4696).